Consider the following 159-residue polypeptide: Cytochrome c-type biogenesis protein CcmE (159 aa).

Over 1-8 (MNIRRKNR) the chain is Cytoplasmic. The helical; Signal-anchor for type II membrane protein transmembrane segment at 9-29 (LWIACAVLAGLALTIGLVLYA) threads the bilayer. The Periplasmic portion of the chain corresponds to 30–159 (LRSNIDLFYT…PASVYKDPAS (130 aa)). The heme site is built by histidine 130 and tyrosine 134. Residues 134-147 (YTPPEVEKAMEANH) show a composition bias toward basic and acidic residues. Positions 134–159 (YTPPEVEKAMEANHRRPASVYKDPAS) are disordered.

It belongs to the CcmE/CycJ family.

Its subcellular location is the cell inner membrane. Heme chaperone required for the biogenesis of c-type cytochromes. Transiently binds heme delivered by CcmC and transfers the heme to apo-cytochromes in a process facilitated by CcmF and CcmH. The chain is Cytochrome c-type biogenesis protein CcmE from Escherichia coli (strain SMS-3-5 / SECEC).